A 780-amino-acid chain; its full sequence is ATP-dependent 6-phosphofructokinase, muscle type (780 aa).

Thr2 carries the post-translational modification N-acetylthreonine. Residues 2 to 390 are N-terminal catalytic PFK domain 1; it reads THEEHHAAKT…NWEVYKLLAH (389 aa). ATP-binding positions include Gly25, 88–89, and 118–121; these read RC and GDGS. Asp119 lines the Mg(2+) pocket. Position 133 is a phosphoserine (Ser133). Substrate contacts are provided by residues 164-166, Arg201, 208-210, Glu264, Arg292, and 298-301; these read SID, MGR, and HVQR. Asp166 functions as the Proton acceptor in the catalytic mechanism. Ser377 carries the post-translational modification Phosphoserine. The tract at residues 391 to 401 is interdomain linker; the sequence is IRPPVSKSGSH. A C-terminal regulatory PFK domain 2 region spans residues 402–780; sequence TVAVMNVGAP…SRKRSGEAPA (379 aa). Residues Arg471 and 528–532 contribute to the beta-D-fructose 2,6-bisphosphate site; that span reads TVSNN. The O-linked (GlcNAc) serine glycan is linked to Ser530. Lys557 bears the N6-(2-hydroxyisobutyryl)lysine mark. Beta-D-fructose 2,6-bisphosphate contacts are provided by residues Arg566, 573 to 575, Glu629, Arg655, and 661 to 664; these read MGG and HMQQ. Ser667 carries the post-translational modification Phosphoserine. Position 735 (Arg735) interacts with beta-D-fructose 2,6-bisphosphate. Residue Ser775 is modified to Phosphoserine.

This sequence belongs to the phosphofructokinase type A (PFKA) family. ATP-dependent PFK group I subfamily. Eukaryotic two domain clade 'E' sub-subfamily. Homo- and heterotetramers. Phosphofructokinase (PFK) enzyme functions as a tetramer composed of different combinations of 3 types of subunits, called PFKM (M), PFKL (L) and PFKP (P). The composition of the PFK tetramer differs according to the tissue type it is present in. The kinetic and regulatory properties of the tetrameric enzyme are dependent on the subunit composition, hence can vary across tissues. Interacts (via C-terminus) with HK1 (via N-terminal spermatogenic cell-specific region). Mg(2+) serves as cofactor. GlcNAcylation decreases enzyme activity.

It localises to the cytoplasm. The catalysed reaction is beta-D-fructose 6-phosphate + ATP = beta-D-fructose 1,6-bisphosphate + ADP + H(+). Its pathway is carbohydrate degradation; glycolysis; D-glyceraldehyde 3-phosphate and glycerone phosphate from D-glucose: step 3/4. With respect to regulation, allosterically activated by ADP, AMP, or fructose 2,6-bisphosphate, and allosterically inhibited by ATP or citrate. In terms of biological role, catalyzes the phosphorylation of D-fructose 6-phosphate to fructose 1,6-bisphosphate by ATP, the first committing step of glycolysis. In Equus caballus (Horse), this protein is ATP-dependent 6-phosphofructokinase, muscle type (PFKM).